Reading from the N-terminus, the 296-residue chain is Ribosomal RNA small subunit methyltransferase J (296 aa).

Residue Asp-205 participates in S-adenosyl-L-methionine binding.

Belongs to the methyltransferase superfamily. RsmJ family.

The protein resides in the cytoplasm. It carries out the reaction guanosine(1516) in 16S rRNA + S-adenosyl-L-methionine = N(2)-methylguanosine(1516) in 16S rRNA + S-adenosyl-L-homocysteine + H(+). In terms of biological role, specifically methylates the guanosine in position 1516 of 16S rRNA. The polypeptide is Ribosomal RNA small subunit methyltransferase J (Psychrobacter arcticus (strain DSM 17307 / VKM B-2377 / 273-4)).